Reading from the N-terminus, the 224-residue chain is Deoxyribose-phosphate aldolase (224 aa).

Asp92 acts as the Proton donor/acceptor in catalysis. Lys154 acts as the Schiff-base intermediate with acetaldehyde in catalysis. Catalysis depends on Lys183, which acts as the Proton donor/acceptor.

It belongs to the DeoC/FbaB aldolase family. DeoC type 1 subfamily.

The protein localises to the cytoplasm. The catalysed reaction is 2-deoxy-D-ribose 5-phosphate = D-glyceraldehyde 3-phosphate + acetaldehyde. It participates in carbohydrate degradation; 2-deoxy-D-ribose 1-phosphate degradation; D-glyceraldehyde 3-phosphate and acetaldehyde from 2-deoxy-alpha-D-ribose 1-phosphate: step 2/2. Its function is as follows. Catalyzes a reversible aldol reaction between acetaldehyde and D-glyceraldehyde 3-phosphate to generate 2-deoxy-D-ribose 5-phosphate. The chain is Deoxyribose-phosphate aldolase from Histophilus somni (strain 129Pt) (Haemophilus somnus).